A 1048-amino-acid chain; its full sequence is FERM, ARHGEF and pleckstrin domain-containing protein 1 (1048 aa).

The interval 1–37 (MGEIEQKPTPASRLGAPENSGISTLERGQKPPPTPSG) is disordered. Phosphoserine is present on residues Ser20 and Ser23. Thr24 carries the phosphothreonine modification. The region spanning 40-320 (MTVKIQMLDD…EHHAFFRLFE (281 aa)) is the FERM domain. Phosphoserine occurs at positions 340, 373, 389, 403, 427, 433, and 437. Residues 361 to 536 (FERKHSKIHS…TDDEEEGRRK (176 aa)) form a disordered region. Over residues 371–395 (TRSLVSQPTAPNSEVPKQSPQSASL) the composition is skewed to polar residues. Composition is skewed to polar residues over residues 472–491 (STGSLTGSPHLSELSINSQG) and 498–513 (VTLSPNLSPDNKQASP). 2 positions are modified to phosphoserine: Ser512 and Ser516. A DH domain is found at 542–733 (KAYYIAKEVS…TEMVAQLHGT (192 aa)). The PH 1 domain maps to 762–859 (EFIRLGSLSK…WMEDIQMAID (98 aa)). A phosphoserine mark is found at Ser836, Ser875, and Ser881. The disordered stretch occupies residues 865–907 (NGPTPELLASSPPDNKSPDEATAADQESEDDLSASRTSLERQA). The residue at position 886 (Thr886) is a Phosphothreonine. Phosphoserine is present on residues Ser892, Ser899, and Ser902. Residues 935–1032 (ENQLSGNLLR…WMEVIRSATS (98 aa)) form the PH 2 domain.

As to quaternary structure, interacts with CADM1. Interacts with RAC1. Detected in brain cortex, hippocampus, striatum, olfactory bulb, cerebellum and hindbrain (at protein level).

The protein resides in the cell membrane. It is found in the synapse. The protein localises to the synaptosome. It localises to the cytoplasm. Its subcellular location is the cytosol. The protein resides in the cell projection. It is found in the filopodium. The protein localises to the dendrite. It localises to the dendritic spine. Functionally, functions as a guanine nucleotide exchange factor for RAC1. May play a role in semaphorin signaling. Plays a role in the assembly and disassembly of dendritic filopodia, the formation of dendritic spines, regulation of dendrite length and ultimately the formation of synapses. The chain is FERM, ARHGEF and pleckstrin domain-containing protein 1 (Farp1) from Mus musculus (Mouse).